The chain runs to 117 residues: Small ribosomal subunit protein bS18c (117 aa).

The interval Ser-86–Phe-117 is disordered.

Belongs to the bacterial ribosomal protein bS18 family. In terms of assembly, part of the 30S ribosomal subunit.

Its subcellular location is the plastid. This chain is Small ribosomal subunit protein bS18c, found in Cuscuta exaltata (Tall dodder).